Reading from the N-terminus, the 36-residue chain is Kappa-actitoxin-Avd6a (36 aa).

The ShKT domain maps to 2 to 36 (CKDNFAAATCKHVKENKNCGSQKYATNCAKTCGKC). Intrachain disulfides connect C2–C36, C11–C29, and C20–C33. A crucial for binding to potassium channels region spans residues 24–25 (KY).

Belongs to the sea anemone type 1 potassium channel toxin family. Type 1b subfamily.

It is found in the secreted. It localises to the nematocyst. Functionally, blocks voltage-gated potassium channels Kv1.2/KCNA2 (IC(50)=140 nM). This is Kappa-actitoxin-Avd6a from Anemonia sulcata (Mediterranean snakelocks sea anemone).